Consider the following 320-residue polypeptide: Cytochrome f (320 aa).

A signal peptide spans 1–35 (MQTRNTFSWIREEITRSISVSLMIYIITWASISSA). Residues Tyr36, Cys56, Cys59, and His60 each contribute to the heme site. The helical transmembrane segment at 286 to 306 (VQGLLFFLGSVVLAQIFLVLK) threads the bilayer.

It belongs to the cytochrome f family. As to quaternary structure, the 4 large subunits of the cytochrome b6-f complex are cytochrome b6, subunit IV (17 kDa polypeptide, petD), cytochrome f and the Rieske protein, while the 4 small subunits are PetG, PetL, PetM and PetN. The complex functions as a dimer. The cofactor is heme.

It is found in the plastid. Its subcellular location is the chloroplast thylakoid membrane. Component of the cytochrome b6-f complex, which mediates electron transfer between photosystem II (PSII) and photosystem I (PSI), cyclic electron flow around PSI, and state transitions. This is Cytochrome f from Barbarea verna (Land cress).